The following is a 1377-amino-acid chain: Zinc finger MYM-type protein 2 (1377 aa).

Residues lysine 48, lysine 88, lysine 98, and lysine 104 each participate in a glycyl lysine isopeptide (Lys-Gly) (interchain with G-Cter in SUMO2) cross-link. Polar residues-rich tracts occupy residues threonine 85 to glutamate 115 and threonine 127 to phenylalanine 138. Residues threonine 85–glutamate 177 form a disordered region. Positions isoleucine 139–aspartate 152 are enriched in basic and acidic residues. Lysine 147 is covalently cross-linked (Glycyl lysine isopeptide (Lys-Gly) (interchain with G-Cter in SUMO2)). Polar residues predominate over residues valine 153–lysine 164. Residue serine 159 is modified to Phosphoserine. Glycyl lysine isopeptide (Lys-Gly) (interchain with G-Cter in SUMO2) cross-links involve residues lysine 253 and lysine 297. The disordered stretch occupies residues asparagine 273–serine 305. Over residues serine 284–glutamine 298 the composition is skewed to polar residues. Residue serine 305 is modified to Phosphoserine. Residues lysine 312, lysine 325, lysine 348, and lysine 366 each participate in a glycyl lysine isopeptide (Lys-Gly) (interchain with G-Cter in SUMO2) cross-link. Residues valine 327 to phenylalanine 363 form an MYM-type 1 zinc finger. The segment at proline 369 to tyrosine 409 adopts an MYM-type 2 zinc-finger fold. Glycyl lysine isopeptide (Lys-Gly) (interchain with G-Cter in SUMO2) cross-links involve residues lysine 417, lysine 441, lysine 491, lysine 503, lysine 513, lysine 529, and lysine 532. MYM-type zinc fingers lie at residues asparagine 421 to tyrosine 456 and isoleucine 463 to tyrosine 502. The MYM-type 5 zinc finger occupies leucine 533–histidine 570. Residues lysine 576, lysine 603, lysine 649, lysine 658, lysine 688, lysine 700, and lysine 709 each participate in a glycyl lysine isopeptide (Lys-Gly) (interchain with G-Cter in SUMO2) cross-link. The MYM-type 6 zinc finger occupies glutamine 636 to tyrosine 671. MYM-type zinc fingers lie at residues arginine 723–phenylalanine 758 and lysine 764–phenylalanine 799. Residues lysine 764, lysine 788, lysine 812, and lysine 829 each participate in a glycyl lysine isopeptide (Lys-Gly) (interchain with G-Cter in SUMO2) cross-link. Phosphoserine is present on residues serine 838 and serine 958. Disordered regions lie at residues leucine 983–proline 1002 and valine 1028–serine 1064. Residues proline 1039 to alanine 1050 show a composition bias toward basic residues. At serine 1064 the chain carries Phosphoserine. The residue at position 1376 (threonine 1376) is a Phosphothreonine.

Can form homodimers. May be a component of a BHC histone deacetylase complex that contains HDAC1, HDAC2, HMG20B/BRAF35, KDM1A, RCOR1/CoREST, PHF21A/BHC80, ZMYM2, ZNF217, ZMYM3, GSE1 and GTF2I. Interacts with FOXP1 and FOXP2.

Its subcellular location is the nucleus. In terms of biological role, involved in the negative regulation of transcription. The polypeptide is Zinc finger MYM-type protein 2 (ZMYM2) (Homo sapiens (Human)).